The primary structure comprises 156 residues: Small ribosomal subunit protein uS7 (156 aa).

This sequence belongs to the universal ribosomal protein uS7 family. Part of the 30S ribosomal subunit. Contacts proteins S9 and S11.

Functionally, one of the primary rRNA binding proteins, it binds directly to 16S rRNA where it nucleates assembly of the head domain of the 30S subunit. Is located at the subunit interface close to the decoding center, probably blocks exit of the E-site tRNA. The polypeptide is Small ribosomal subunit protein uS7 (Tolumonas auensis (strain DSM 9187 / NBRC 110442 / TA 4)).